The primary structure comprises 245 residues: tRNA1(Val) (adenine(37)-N6)-methyltransferase (245 aa).

The protein belongs to the methyltransferase superfamily. tRNA (adenine-N(6)-)-methyltransferase family.

The protein localises to the cytoplasm. The catalysed reaction is adenosine(37) in tRNA1(Val) + S-adenosyl-L-methionine = N(6)-methyladenosine(37) in tRNA1(Val) + S-adenosyl-L-homocysteine + H(+). Functionally, specifically methylates the adenine in position 37 of tRNA(1)(Val) (anticodon cmo5UAC). This is tRNA1(Val) (adenine(37)-N6)-methyltransferase from Shigella sonnei (strain Ss046).